The primary structure comprises 182 residues: Large ribosomal subunit protein uL10 (182 aa).

Belongs to the universal ribosomal protein uL10 family. Part of the ribosomal stalk of the 50S ribosomal subunit. The N-terminus interacts with L11 and the large rRNA to form the base of the stalk. The C-terminus forms an elongated spine to which L12 dimers bind in a sequential fashion forming a multimeric L10(L12)X complex.

In terms of biological role, forms part of the ribosomal stalk, playing a central role in the interaction of the ribosome with GTP-bound translation factors. This chain is Large ribosomal subunit protein uL10, found in Parafrankia sp. (strain EAN1pec).